The following is a 344-amino-acid chain: Holliday junction branch migration complex subunit RuvB (344 aa).

Residues 1–180 (MSRIVSGEAQ…FGIPVRLEFY (180 aa)) form a large ATPase domain (RuvB-L) region. ATP-binding residues include Leu19, Arg20, Gly61, Lys64, Thr65, Thr66, Arg170, Tyr180, and Arg217. Thr65 lines the Mg(2+) pocket. The small ATPAse domain (RuvB-S) stretch occupies residues 181–251 (THDELARVLL…AAAAALARLD (71 aa)). A head domain (RuvB-H) region spans residues 254-344 (EVGLDALDRR…AAPPADLFDK (91 aa)). The DNA site is built by Arg290, Arg309, and Arg314.

Belongs to the RuvB family. As to quaternary structure, homohexamer. Forms an RuvA(8)-RuvB(12)-Holliday junction (HJ) complex. HJ DNA is sandwiched between 2 RuvA tetramers; dsDNA enters through RuvA and exits via RuvB. An RuvB hexamer assembles on each DNA strand where it exits the tetramer. Each RuvB hexamer is contacted by two RuvA subunits (via domain III) on 2 adjacent RuvB subunits; this complex drives branch migration. In the full resolvosome a probable DNA-RuvA(4)-RuvB(12)-RuvC(2) complex forms which resolves the HJ.

The protein resides in the cytoplasm. It carries out the reaction ATP + H2O = ADP + phosphate + H(+). The RuvA-RuvB-RuvC complex processes Holliday junction (HJ) DNA during genetic recombination and DNA repair, while the RuvA-RuvB complex plays an important role in the rescue of blocked DNA replication forks via replication fork reversal (RFR). RuvA specifically binds to HJ cruciform DNA, conferring on it an open structure. The RuvB hexamer acts as an ATP-dependent pump, pulling dsDNA into and through the RuvAB complex. RuvB forms 2 homohexamers on either side of HJ DNA bound by 1 or 2 RuvA tetramers; 4 subunits per hexamer contact DNA at a time. Coordinated motions by a converter formed by DNA-disengaged RuvB subunits stimulates ATP hydrolysis and nucleotide exchange. Immobilization of the converter enables RuvB to convert the ATP-contained energy into a lever motion, pulling 2 nucleotides of DNA out of the RuvA tetramer per ATP hydrolyzed, thus driving DNA branch migration. The RuvB motors rotate together with the DNA substrate, which together with the progressing nucleotide cycle form the mechanistic basis for DNA recombination by continuous HJ branch migration. Branch migration allows RuvC to scan DNA until it finds its consensus sequence, where it cleaves and resolves cruciform DNA. This chain is Holliday junction branch migration complex subunit RuvB, found in Phenylobacterium zucineum (strain HLK1).